The sequence spans 87 residues: Cell division topological specificity factor (87 aa).

The protein belongs to the MinE family.

In terms of biological role, prevents the cell division inhibition by proteins MinC and MinD at internal division sites while permitting inhibition at polar sites. This ensures cell division at the proper site by restricting the formation of a division septum at the midpoint of the long axis of the cell. In Delftia acidovorans (strain DSM 14801 / SPH-1), this protein is Cell division topological specificity factor.